The chain runs to 184 residues: Large ribosomal subunit protein uL6 (184 aa).

This sequence belongs to the universal ribosomal protein uL6 family. In terms of assembly, part of the 50S ribosomal subunit.

Functionally, this protein binds to the 23S rRNA, and is important in its secondary structure. It is located near the subunit interface in the base of the L7/L12 stalk, and near the tRNA binding site of the peptidyltransferase center. The polypeptide is Large ribosomal subunit protein uL6 (Aster yellows witches'-broom phytoplasma (strain AYWB)).